The primary structure comprises 428 residues: Light-independent protochlorophyllide reductase subunit N (428 aa).

Residues C31, C56, and C117 each contribute to the [4Fe-4S] cluster site.

The protein belongs to the BchN/ChlN family. In terms of assembly, protochlorophyllide reductase is composed of three subunits; BchL, BchN and BchB. Forms a heterotetramer of two BchB and two BchN subunits. Requires [4Fe-4S] cluster as cofactor.

The catalysed reaction is chlorophyllide a + oxidized 2[4Fe-4S]-[ferredoxin] + 2 ADP + 2 phosphate = protochlorophyllide a + reduced 2[4Fe-4S]-[ferredoxin] + 2 ATP + 2 H2O. It participates in porphyrin-containing compound metabolism; bacteriochlorophyll biosynthesis (light-independent). Functionally, component of the dark-operative protochlorophyllide reductase (DPOR) that uses Mg-ATP and reduced ferredoxin to reduce ring D of protochlorophyllide (Pchlide) to form chlorophyllide a (Chlide). This reaction is light-independent. The NB-protein (BchN-BchB) is the catalytic component of the complex. The chain is Light-independent protochlorophyllide reductase subunit N from Rhodopseudomonas palustris (strain BisB5).